The chain runs to 134 residues: Biopolymer transport protein exbD2 (134 aa).

At 1–17 the chain is on the cytoplasmic side; that stretch reads MRLGRRTSKQEEAQIDL. The chain crosses the membrane as a helical span at residues 18–38; that stretch reads TSMLDIVFIMLIFFIVTSSFV. The Periplasmic segment spans residues 39-134; it reads RESGVEVNRP…KSIALAAEKP (96 aa).

The protein belongs to the ExbD/TolR family. In terms of assembly, the accessory proteins ExbB and ExbD seem to form a complex with TonB.

Its subcellular location is the cell inner membrane. Functionally, involved in the TonB-dependent energy-dependent transport of various receptor-bound substrates. This chain is Biopolymer transport protein exbD2 (exbD2), found in Vibrio cholerae serotype O1 (strain ATCC 39315 / El Tor Inaba N16961).